The chain runs to 494 residues: UDP-N-acetylmuramoyl-L-alanyl-D-glutamate--L-lysine ligase (494 aa).

Serine 30 contacts UDP-N-acetyl-alpha-D-muramoyl-L-alanyl-D-glutamate. 110–116 contributes to the ATP binding site; sequence GTNGKTS. UDP-N-acetyl-alpha-D-muramoyl-L-alanyl-D-glutamate is bound by residues 152-153, serine 179, and arginine 187; that span reads TT. The residue at position 219 (lysine 219) is an N6-carboxylysine. The L-lysine recognition motif motif lies at 406-409; sequence DNPA.

The protein belongs to the MurCDEF family. MurE subfamily. Carboxylation is probably crucial for Mg(2+) binding and, consequently, for the gamma-phosphate positioning of ATP.

The protein localises to the cytoplasm. It catalyses the reaction UDP-N-acetyl-alpha-D-muramoyl-L-alanyl-D-glutamate + L-lysine + ATP = UDP-N-acetyl-alpha-D-muramoyl-L-alanyl-gamma-D-glutamyl-L-lysine + ADP + phosphate + H(+). It functions in the pathway cell wall biogenesis; peptidoglycan biosynthesis. Functionally, catalyzes the addition of L-lysine to the nucleotide precursor UDP-N-acetylmuramoyl-L-alanyl-D-glutamate (UMAG) in the biosynthesis of bacterial cell-wall peptidoglycan. This is UDP-N-acetylmuramoyl-L-alanyl-D-glutamate--L-lysine ligase from Staphylococcus haemolyticus (strain JCSC1435).